Consider the following 88-residue polypeptide: Small ribosomal subunit protein uS15c (88 aa).

This sequence belongs to the universal ribosomal protein uS15 family. In terms of assembly, part of the 30S ribosomal subunit.

It is found in the plastid. The protein localises to the chloroplast. The protein is Small ribosomal subunit protein uS15c (rps15) of Pinus thunbergii (Japanese black pine).